The following is a 210-amino-acid chain: Adenylate kinase isoenzyme 1 (210 aa).

Residue 30–35 (GSGKGT) coordinates ATP. The NMP stretch occupies residues 50–79 (SSGDLLRDEVKSGSPRGAQLTAIMESGALV). AMP contacts are provided by residues serine 51, arginine 56, 77–79 (ALV), 107–110 (GYPR), and glutamine 114. Positions 144–154 (HRAQTSGRADD) are LID. Residue arginine 145 participates in ATP binding. AMP is bound by residues arginine 151 and arginine 162. Glycine 190 serves as a coordination point for ATP.

This sequence belongs to the adenylate kinase family. AK1 subfamily. As to quaternary structure, monomer.

It is found in the cytoplasm. It catalyses the reaction AMP + ATP = 2 ADP. Catalyzes the reversible transfer of the terminal phosphate group between ATP and AMP. Plays an important role in cellular energy homeostasis and in adenine nucleotide metabolism. The polypeptide is Adenylate kinase isoenzyme 1 (Caenorhabditis elegans).